Consider the following 81-residue polypeptide: Salivary thrombin inhibitor anophelin (81 aa).

The first 22 residues, 1–22 (MANKLFLISLLCVVLVAKIAQA), serve as a signal peptide directing secretion. N45 carries an N-linked (GlcNAc...) asparagine glycan. The segment at 70 to 73 (DPGR) is blocks active site cleft of host thrombin in a reverse direction compared to substrates.

It belongs to the anophelin family. In terms of assembly, interacts with human F2 (thrombin); the interaction results in thrombin inhibition.

It is found in the secreted. Functionally, salivary protein with anticoagulant activity that inhibits host thrombin (F2). The protein is Salivary thrombin inhibitor anophelin of Anopheles darlingi (Mosquito).